We begin with the raw amino-acid sequence, 1391 residues long: DNA-directed RNA polymerase subunit beta' (1391 aa).

Zn(2+) contacts are provided by cysteine 72, cysteine 74, cysteine 87, and cysteine 90. 3 residues coordinate Mg(2+): aspartate 462, aspartate 464, and aspartate 466. Residues cysteine 816, cysteine 890, cysteine 897, and cysteine 900 each contribute to the Zn(2+) site.

It belongs to the RNA polymerase beta' chain family. In terms of assembly, the RNAP catalytic core consists of 2 alpha, 1 beta, 1 beta' and 1 omega subunit. When a sigma factor is associated with the core the holoenzyme is formed, which can initiate transcription. Mg(2+) serves as cofactor. The cofactor is Zn(2+).

It carries out the reaction RNA(n) + a ribonucleoside 5'-triphosphate = RNA(n+1) + diphosphate. In terms of biological role, DNA-dependent RNA polymerase catalyzes the transcription of DNA into RNA using the four ribonucleoside triphosphates as substrates. The chain is DNA-directed RNA polymerase subunit beta' from Neisseria gonorrhoeae (strain ATCC 700825 / FA 1090).